The primary structure comprises 764 residues: 5-methyltetrahydropteroyltriglutamate--homocysteine methyltransferase (764 aa).

Residues 16 to 19 (RELK) and Lys-121 contribute to the 5-methyltetrahydropteroyltri-L-glutamate site. L-homocysteine contacts are provided by residues 440–442 (IGS) and Glu-493. L-methionine contacts are provided by residues 440–442 (IGS) and Glu-493. Residues 524 to 525 (RC) and Trp-570 each bind 5-methyltetrahydropteroyltri-L-glutamate. Asp-608 contributes to the L-homocysteine binding site. Asp-608 serves as a coordination point for L-methionine. Glu-614 contributes to the 5-methyltetrahydropteroyltri-L-glutamate binding site. His-650, Cys-652, and Glu-674 together coordinate Zn(2+). The active-site Proton donor is the His-703. Cys-735 is a Zn(2+) binding site.

The protein belongs to the vitamin-B12 independent methionine synthase family. Zn(2+) is required as a cofactor.

It catalyses the reaction 5-methyltetrahydropteroyltri-L-glutamate + L-homocysteine = tetrahydropteroyltri-L-glutamate + L-methionine. The protein operates within amino-acid biosynthesis; L-methionine biosynthesis via de novo pathway; L-methionine from L-homocysteine (MetE route): step 1/1. Catalyzes the transfer of a methyl group from 5-methyltetrahydrofolate to homocysteine resulting in methionine formation. This is 5-methyltetrahydropteroyltriglutamate--homocysteine methyltransferase from Burkholderia ambifaria (strain ATCC BAA-244 / DSM 16087 / CCUG 44356 / LMG 19182 / AMMD) (Burkholderia cepacia (strain AMMD)).